The primary structure comprises 386 residues: Enoyl-[acyl-carrier-protein] reductase 1, mitochondrial (386 aa).

The transit peptide at 1 to 22 (MYSVLKQSIRPRLLATHNQFRT) directs the protein to the mitochondrion. The active-site Proton donor is the Y79. NADP(+) is bound by residues N172, 199-202 (TSAV), 222-224 (RDR), 296-299 (YGGM), 321-323 (FWV), and K381.

It belongs to the zinc-containing alcohol dehydrogenase family. Quinone oxidoreductase subfamily. In terms of assembly, homodimer and heterodimer with ETR2.

It is found in the mitochondrion. It carries out the reaction a 2,3-saturated acyl-[ACP] + NADP(+) = a (2E)-enoyl-[ACP] + NADPH + H(+). It catalyses the reaction (2E,4E)-hexadienoyl-CoA + NADPH + H(+) = (4E)-hexenoyl-CoA + NADP(+). The catalysed reaction is (2E)-hexenoyl-CoA + NADPH + H(+) = hexanoyl-CoA + NADP(+). In terms of biological role, catalyzes the NADPH-dependent reduction of trans-2-enoyl thioesters in mitochondrial fatty acid synthesis (fatty acid synthesis type II). Fatty acid chain elongation in mitochondria uses acyl carrier protein (ACP) as an acyl group carrier, but the enzyme accepts both ACP and CoA thioesters as substrates in vitro. Required for respiration and the maintenance of the mitochondrial compartment. The chain is Enoyl-[acyl-carrier-protein] reductase 1, mitochondrial (ETR1) from Candida tropicalis (Yeast).